A 656-amino-acid polypeptide reads, in one-letter code: Mucin-20 (656 aa).

The first 21 residues, 1–21 (MGSVWGLAVPLLVFCWKVGVS), serve as a signal peptide directing secretion. 3 stretches are compositionally biased toward polar residues: residues 85–96 (ATSISSEVNSRD), 114–125 (PAASSLEAQTTS), and 159–170 (TTSPAPSFLDTQ). Disordered stretches follow at residues 85–125 (ATSI…QTTS), 159–232 (TTSP…TQTI), and 329–348 (YLSSESSSSSDSSAGVLSSS). The span at 171-227 (TTSPEPSSLTTSPAPSSLITSPTPSSLTTSPAPSFLDTQTTSPAPSSLTTSPAPSSL) shows a compositional bias: low complexity. Repeat copies occupy residues 180 to 188 (TTSPAPSSL), 189 to 197 (ITSPTPSSL), 198 to 206 (TTSPAPSFL), 210 to 218 (TTSPAPSSL), and 219 to 227 (TTSPAPSSL). Positions 180–227 (TTSPAPSSLITSPTPSSLTTSPAPSFLDTQTTSPAPSSLTTSPAPSSL) are approximate repeats. N-linked (GlcNAc...) asparagine glycosylation is found at Asn366 and Asn570. An involved in oligomerization region spans residues 399–603 (TAALFTSEIL…WIRKTTKHDP (205 aa)). The span at 560-573 (STTASTSKNPNITL) shows a compositional bias: polar residues. The tract at residues 560 to 592 (STTASTSKNPNITLTKTTASPKPPTHPTTSAST) is disordered. The interval 604–656 (GEDGGFLLVRLTVASPKDLTEHNAREKLMNQLRRELHARMPLVHMSFLSIRRG) is interaction with MET.

In terms of assembly, interacts with MET; oligomerization increases affinity for MET. As to expression, highly expressed in kidney. Up-regulated in renal tissues during renal injury.

It localises to the secreted. The protein resides in the apical cell membrane. Its subcellular location is the basolateral cell membrane. It is found in the cell projection. The protein localises to the microvillus membrane. In terms of biological role, may regulate MET signaling cascade. Seems to decrease hepatocyte growth factor (HGF)-induced transient MAPK activation. Blocks GRB2 recruitment to MET thus suppressing the GRB2-RAS pathway. Inhibits HGF-induced proliferation of MMP1 and MMP9 expression. The chain is Mucin-20 (Muc20) from Mus musculus (Mouse).